We begin with the raw amino-acid sequence, 590 residues long: MSLLQIYWRALGYLAADKRRVALICGANVALAAIAILEPIMFGRVIDAISEHGSVFSTLAVWAGLGAFNVIAFVLVARGADRFAHARRSEVLCQSFERVITMPLAWHHQRGTSNALHTLLRAVETLFSLWLEFMRQHLSTAVALVLLVPTALSMDVRMSMVLLGLGVLYVGIGRLVMKRTKAGQAAVERHYHKVFAHVTDSVSNVAVLQSYNRLGHEAETLRRYVKNLLDAQNPVLDWWAIANALNRLSSTISMMVVLLIGAYLVTHGQLRVGDVIAFTGFATLLISRLDQMSAFANQISEARAKLEEFYKLEDSAADAAEPDGLRDLTNVTGHVRFEDVGFEFANSGQGVSGVSFEVQAGQTVAIVGPTGAGKTTLINLLQRVFSPSTGRILIDGIDTRTVTRKSLRHSIATVFQDAGLLNRSIEDNIRVGRADASNVEIHAAAVAAAAQDFILAKSGGYDTVVGERGGQLSGGERQRIAIARAVLKDAPILVLDEATSALDVETEDRVKEAIDELRRDRTTFIIAHRLTTVRDADLVVFMDKGRVVEMGGFAELSLRNGRFASLLRAGGLLNDEEVRRLSRSVQGEAA.

The ABC transmembrane type-1 domain maps to 21–301; sequence VALICGANVA…MSAFANQISE (281 aa). 6 helical membrane passes run 22 to 42, 55 to 75, 136 to 156, 158 to 178, 248 to 268, and 275 to 295; these read ALIC…PIMF, VFST…AFVL, QHLS…SMDV, MSMV…LVMK, LSST…VTHG, and VIAF…MSAF. Positions 335 to 569 constitute an ABC transporter domain; it reads VRFEDVGFEF…NGRFASLLRA (235 aa). 368–375 provides a ligand contact to ATP; it reads GPTGAGKT.

Belongs to the ABC transporter superfamily. Beta-(1--&gt;2)glucan exporter (TC 3.A.1.108.1) family. Homodimer.

The protein localises to the cell inner membrane. It catalyses the reaction [(1-&gt;2)-beta-D-glucosyl](n)(in) + ATP + H2O = [(1-&gt;2)-beta-D-glucosyl](n)(out) + ADP + phosphate + H(+). Functionally, involved in beta-(1--&gt;2)glucan export. Transmembrane domains (TMD) form a pore in the inner membrane and the ATP-binding domain (NBD) is responsible for energy generation. In Mesorhizobium japonicum (strain LMG 29417 / CECT 9101 / MAFF 303099) (Mesorhizobium loti (strain MAFF 303099)), this protein is Beta-(1--&gt;2)glucan export ATP-binding/permease protein NdvA.